A 398-amino-acid chain; its full sequence is Selection and upkeep of intraepithelial T-cells protein 8 (398 aa).

A signal peptide spans 1-25 (MMKPEFSHFFGFCVYFLFLQVMASS). Residues 26–141 (EKLRVTTPTR…DVAIMNLNVT (116 aa)) enclose the Ig-like V-type domain. Topologically, residues 26-244 (EKLRVTTPTR…ANELFNQDYL (219 aa)) are extracellular. A disulfide bond links cysteine 49 and cysteine 123. Residues asparagine 92 and asparagine 139 are each glycosylated (N-linked (GlcNAc...) asparagine). The 92-residue stretch at 142-233 (AVGLETEIHV…TGEEKQTSII (92 aa)) folds into the Ig-like C1-type domain. The cysteines at positions 163 and 217 are disulfide-linked. The chain crosses the membrane as a helical span at residues 245–265 (WVGIFPFSVLSLILFGVLPFI). Residues 266-288 (NSFFRSQGCASGCLSKCLPVVTS) lie on the Cytoplasmic side of the membrane. A helical transmembrane segment spans residues 289-309 (WPVQIVHFLVCSGVLFAVYLP). Topologically, residues 310 to 331 (HRYRVSLSDPQFPLYNNWITEL) are extracellular. Residues 332 to 352 (LIVILFLTICFVLPITVLLLI) traverse the membrane as a helical segment. The Cytoplasmic portion of the chain corresponds to 353–398 (KLSPTCLAKWEKNKDDIMDSQLGLGKAREASTLYEEQSRKSWEQEK).

This sequence belongs to the SKINT family. Expressed in skin, thymus, testis and, to a lower extent, bladder, brain, heart, kidney, mammary gland, small intestine and uterus.

The protein localises to the membrane. Its function is as follows. May act by engaging a cell surface molecule on immature T-cells in the embryonic thymus. The chain is Selection and upkeep of intraepithelial T-cells protein 8 (Skint8) from Mus musculus (Mouse).